We begin with the raw amino-acid sequence, 321 residues long: Putative pyridoxal kinase (321 aa).

2 residues coordinate substrate: Ser23 and Tyr144. ATP is bound by residues 203-204 (TS) and 230-242 (TFPR…VGTG). Asp243 contacts substrate.

It belongs to the pyridoxine kinase family. The cofactor is Zn(2+). It depends on Mg(2+) as a cofactor.

It catalyses the reaction pyridoxal + ATP = pyridoxal 5'-phosphate + ADP + H(+). Functionally, required for synthesis of pyridoxal-5-phosphate from vitamin B6. The protein is Putative pyridoxal kinase of Caenorhabditis elegans.